We begin with the raw amino-acid sequence, 95 residues long: MQNFMNNLSGGSNKEGGEKSNDFLSSALGAEKQVKQAQTMKKISDMFPGSTSEKLAILNKINSASGGRVLETLGEIENSSSSQDEIITKLKGFLK.

Residues 1-12 are compositionally biased toward low complexity; sequence MQNFMNNLSGGS. The segment at 1 to 27 is disordered; it reads MQNFMNNLSGGSNKEGGEKSNDFLSSA.

This is an uncharacterized protein from Schizosaccharomyces pombe (strain 972 / ATCC 24843) (Fission yeast).